Reading from the N-terminus, the 201-residue chain is ATP synthase subunit b 2 (201 aa).

A compositionally biased stretch (polar residues) spans 1-17; the sequence is MAEQKNPLTTPSPNADT. Residues 1-39 form a disordered region; it reads MAEQKNPLTTPSPNADTTIVPAGSPHTHTEQPSGGHGGA. Residues 47–66 traverse the membrane as a helical segment; that stretch reads TFLSQLIWLALAFGLLYYLM.

The protein belongs to the ATPase B chain family. In terms of assembly, F-type ATPases have 2 components, F(1) - the catalytic core - and F(0) - the membrane proton channel. F(1) has five subunits: alpha(3), beta(3), gamma(1), delta(1), epsilon(1). F(0) has three main subunits: a(1), b(2) and c(10-14). The alpha and beta chains form an alternating ring which encloses part of the gamma chain. F(1) is attached to F(0) by a central stalk formed by the gamma and epsilon chains, while a peripheral stalk is formed by the delta and b chains.

It localises to the cell inner membrane. F(1)F(0) ATP synthase produces ATP from ADP in the presence of a proton or sodium gradient. F-type ATPases consist of two structural domains, F(1) containing the extramembraneous catalytic core and F(0) containing the membrane proton channel, linked together by a central stalk and a peripheral stalk. During catalysis, ATP synthesis in the catalytic domain of F(1) is coupled via a rotary mechanism of the central stalk subunits to proton translocation. Functionally, component of the F(0) channel, it forms part of the peripheral stalk, linking F(1) to F(0). The b'-subunit is a diverged and duplicated form of b found in plants and photosynthetic bacteria. In Methylorubrum extorquens (strain PA1) (Methylobacterium extorquens), this protein is ATP synthase subunit b 2 (atpF2).